A 399-amino-acid polypeptide reads, in one-letter code: Nicotinate phosphoribosyltransferase (399 aa).

Histidine 221 carries the phosphohistidine; by autocatalysis modification.

It belongs to the NAPRTase family. In terms of processing, transiently phosphorylated on a His residue during the reaction cycle. Phosphorylation strongly increases the affinity for substrates and increases the rate of nicotinate D-ribonucleotide production. Dephosphorylation regenerates the low-affinity form of the enzyme, leading to product release.

The catalysed reaction is nicotinate + 5-phospho-alpha-D-ribose 1-diphosphate + ATP + H2O = nicotinate beta-D-ribonucleotide + ADP + phosphate + diphosphate. It participates in cofactor biosynthesis; NAD(+) biosynthesis; nicotinate D-ribonucleotide from nicotinate: step 1/1. In terms of biological role, catalyzes the synthesis of beta-nicotinate D-ribonucleotide from nicotinate and 5-phospho-D-ribose 1-phosphate at the expense of ATP. This chain is Nicotinate phosphoribosyltransferase, found in Buchnera aphidicola subsp. Acyrthosiphon pisum (strain 5A).